A 395-amino-acid polypeptide reads, in one-letter code: L-methionine gamma-lyase (395 aa).

Pyridoxal 5'-phosphate is bound by residues 56–58 (YTR) and 86–87 (GM). Substrate is bound at residue Tyr-111. A pyridoxal 5'-phosphate-binding site is contributed by 206-208 (SAT). An N6-(pyridoxal phosphate)lysine modification is found at Lys-209. A substrate-binding site is contributed by Arg-373.

Belongs to the trans-sulfuration enzymes family. L-methionine gamma-lyase subfamily. As to quaternary structure, homotetramer. It depends on pyridoxal 5'-phosphate as a cofactor.

It carries out the reaction L-methionine + H2O = methanethiol + 2-oxobutanoate + NH4(+). The catalysed reaction is L-homocysteine + H2O = 2-oxobutanoate + hydrogen sulfide + NH4(+) + H(+). The enzyme catalyses L-cysteine + H2O = hydrogen sulfide + pyruvate + NH4(+) + H(+). Its function is as follows. Catalyzes the alpha,gamma-elimination of L-methionine to produce methanethiol, 2-oxobutanoate and ammonia, and that of L-homocysteine. Can also use L-cysteine as substrate, catalyzing its alpha,beta-elimination; this activity seems to only minimally contribute to the production of hydrogen sulfide (H2S) by F.nucleatum in the oral cavity, which is toxic for a large variety of cells in periodontal regions. The sequence is that of L-methionine gamma-lyase from Fusobacterium nucleatum subsp. nucleatum (strain ATCC 25586 / DSM 15643 / BCRC 10681 / CIP 101130 / JCM 8532 / KCTC 2640 / LMG 13131 / VPI 4355).